The following is a 1142-amino-acid chain: Desmoglein-2.1 (1142 aa).

Residues 1-18 (MARRISPVVAFLLCFGLS) form the signal peptide. Residues 19 to 38 (HFFEAEARLQHSVALHRQKR) constitute a propeptide that is removed on maturation. Topologically, residues 39-643 (EWIVPPQILE…AKKGSRLGPA (605 aa)) are extracellular. 4 consecutive Cadherin domains span residues 64–148 (SDKE…APVF), 156–258 (VDEL…VPTL), 259–416 (GGPY…GPKF), and 417–527 (FPGT…CPTL). A glycan (N-linked (GlcNAc...) asparagine) is linked at Asn-115. Positions 369–389 (SGAAGGAGAMGGASGSGGGTG) are disordered. Asn-490 and Asn-576 each carry an N-linked (GlcNAc...) asparagine glycan. A helical membrane pass occupies residues 644-664 (GIGLLLLALLALLLIPLLLLL). Topologically, residues 665 to 1142 (CTCGMTGAFT…RKVVTTQSVK (478 aa)) are cytoplasmic. 4 Desmoglein repeat repeats span residues 948-974 (VEQQ…NSGP), 975-998 (VAEG…ERMV), 999-1039 (LVFR…VLQG), and 1040-1071 (TIQR…NGIS).

It localises to the cell junction. The protein resides in the desmosome. Its subcellular location is the cell membrane. The protein localises to the cytoplasm. Functionally, a component of desmosome cell-cell junctions which are required for positive regulation of cellular adhesion. Involved in the interaction of plaque proteins and intermediate filaments mediating cell-cell adhesion. Required for embryogenesis, specifically for progression of epiboly and normal convergence-extension movements during gastrulation. This chain is Desmoglein-2.1, found in Danio rerio (Zebrafish).